The sequence spans 532 residues: Probable calcium-binding mitochondrial carrier CBG00135 (532 aa).

EF-hand domains lie at 70–105 (EKEK…QTPH), 107–136 (PATM…NYVI), 137–172 (AHEA…MGVN), and 173–208 (LDDH…YPST). The Ca(2+) site is built by aspartate 83, aspartate 85, aspartate 87, serine 89, and aspartate 94. Ca(2+)-binding residues include aspartate 150, asparagine 152, aspartate 154, glutamate 156, and glutamate 161. Solcar repeat units follow at residues 243 to 329 (GVWW…IKRW), 339 to 425 (LTTY…LKSC), and 436 to 526 (PGVL…VRKQ). 6 helical membrane passes run 249–266 (LVAG…TAPF), 304–323 (GNGI…FMSY), 349–362 (SSAG…IYPM), 400–419 (GYLP…LTVY), 442–459 (LACG…SYPL), and 501–518 (GITP…ISYV).

This sequence belongs to the mitochondrial carrier (TC 2.A.29) family.

Its subcellular location is the mitochondrion inner membrane. Its function is as follows. Calcium-dependent mitochondrial solute carrier. The chain is Probable calcium-binding mitochondrial carrier CBG00135 from Caenorhabditis briggsae.